The sequence spans 314 residues: DNA-directed RNA polymerase subunit alpha (314 aa).

Positions 1–228 (MIEIEKPKIE…EHLNIFVGLT (228 aa)) are alpha N-terminal domain (alpha-NTD). An alpha C-terminal domain (alpha-CTD) region spans residues 246 to 314 (EKVLEMTIEE…ELGLGLRKDD (69 aa)).

The protein belongs to the RNA polymerase alpha chain family. Homodimer. The RNAP catalytic core consists of 2 alpha, 1 beta, 1 beta' and 1 omega subunit. When a sigma factor is associated with the core the holoenzyme is formed, which can initiate transcription.

It catalyses the reaction RNA(n) + a ribonucleoside 5'-triphosphate = RNA(n+1) + diphosphate. Its function is as follows. DNA-dependent RNA polymerase catalyzes the transcription of DNA into RNA using the four ribonucleoside triphosphates as substrates. This Bacillus pumilus (strain SAFR-032) protein is DNA-directed RNA polymerase subunit alpha.